The following is a 363-amino-acid chain: Oxygen-dependent coproporphyrinogen-III oxidase (363 aa).

Ser-119 serves as a coordination point for substrate. A divalent metal cation is bound by residues His-123 and His-133. His-133 functions as the Proton donor in the catalytic mechanism. 135 to 137 lines the substrate pocket; sequence NYR. Positions 167 and 197 each coordinate a divalent metal cation. Residues 287–322 form an important for dimerization region; the sequence is YVEFNLVWDRGTIFGLQTNGRTESILMSLPPLVRWE.

This sequence belongs to the aerobic coproporphyrinogen-III oxidase family. In terms of assembly, homodimer. It depends on a divalent metal cation as a cofactor.

The protein resides in the cytoplasm. The catalysed reaction is coproporphyrinogen III + O2 + 2 H(+) = protoporphyrinogen IX + 2 CO2 + 2 H2O. It participates in porphyrin-containing compound metabolism; protoporphyrin-IX biosynthesis; protoporphyrinogen-IX from coproporphyrinogen-III (O2 route): step 1/1. Its function is as follows. Involved in the heme and chlorophyll biosynthesis. Catalyzes the aerobic oxidative decarboxylation of propionate groups of rings A and B of coproporphyrinogen-III to yield the vinyl groups in protoporphyrinogen-IX. The chain is Oxygen-dependent coproporphyrinogen-III oxidase from Parasynechococcus marenigrum (strain WH8102).